The following is a 624-amino-acid chain: Low affinity potassium transport system protein Kup (624 aa).

12 helical membrane-spanning segments follow: residues Leu9 to Leu29, Val49 to Leu69, Val103 to Ile123, Pro137 to Ile157, Val165 to Leu185, Val213 to Ala233, Trp247 to Leu267, Pro276 to Ala296, Ile337 to Val357, Leu365 to Thr385, Phe398 to Leu418, and Leu421 to Thr441.

Belongs to the HAK/KUP transporter (TC 2.A.72) family.

It is found in the cell inner membrane. It carries out the reaction K(+)(in) + H(+)(in) = K(+)(out) + H(+)(out). Functionally, responsible for the low-affinity transport of potassium into the cell. Likely operates as a K(+):H(+) symporter. The polypeptide is Low affinity potassium transport system protein Kup (Shigella dysenteriae serotype 1 (strain Sd197)).